Reading from the N-terminus, the 260-residue chain is Putative imidazole glycerol phosphate synthase subunit hisF3 (260 aa).

Asp135 is an active-site residue.

The protein belongs to the HisA/HisF family. As to quaternary structure, heterodimer of HisH and HisF.

Its subcellular location is the cytoplasm. The enzyme catalyses 5-[(5-phospho-1-deoxy-D-ribulos-1-ylimino)methylamino]-1-(5-phospho-beta-D-ribosyl)imidazole-4-carboxamide + L-glutamine = D-erythro-1-(imidazol-4-yl)glycerol 3-phosphate + 5-amino-1-(5-phospho-beta-D-ribosyl)imidazole-4-carboxamide + L-glutamate + H(+). It participates in amino-acid biosynthesis; L-histidine biosynthesis; L-histidine from 5-phospho-alpha-D-ribose 1-diphosphate: step 5/9. IGPS catalyzes the conversion of PRFAR and glutamine to IGP, AICAR and glutamate. The HisF subunit catalyzes the cyclization activity that produces IGP and AICAR from PRFAR using the ammonia provided by the HisH subunit. The protein is Putative imidazole glycerol phosphate synthase subunit hisF3 (hisF3) of Vibrio vulnificus (strain YJ016).